Consider the following 270-residue polypeptide: Putative phosphoenolpyruvate synthase regulatory protein (270 aa).

ADP is bound at residue 150-157 (GVSRCGKT).

It belongs to the pyruvate, phosphate/water dikinase regulatory protein family. PSRP subfamily.

The catalysed reaction is [pyruvate, water dikinase] + ADP = [pyruvate, water dikinase]-phosphate + AMP + H(+). It catalyses the reaction [pyruvate, water dikinase]-phosphate + phosphate + H(+) = [pyruvate, water dikinase] + diphosphate. Its function is as follows. Bifunctional serine/threonine kinase and phosphorylase involved in the regulation of the phosphoenolpyruvate synthase (PEPS) by catalyzing its phosphorylation/dephosphorylation. In Shewanella denitrificans (strain OS217 / ATCC BAA-1090 / DSM 15013), this protein is Putative phosphoenolpyruvate synthase regulatory protein.